A 130-amino-acid polypeptide reads, in one-letter code: MAKAKYYGTGRRKSSIARVYLVPGTGKVTINKRDMDAYFGLETLKLIARQPLVLTETADKFDVLVNVHGGGFTGQAGAIRHGISRALLQADADYRPALKKAGFLTRDPRMKERKKYGLKAARRAPQFSKR.

A disordered region spans residues 109-130 (RMKERKKYGLKAARRAPQFSKR). Positions 111 to 130 (KERKKYGLKAARRAPQFSKR) are enriched in basic residues.

It belongs to the universal ribosomal protein uS9 family.

The sequence is that of Small ribosomal subunit protein uS9 from Lachnoclostridium phytofermentans (strain ATCC 700394 / DSM 18823 / ISDg) (Clostridium phytofermentans).